Reading from the N-terminus, the 267-residue chain is Zinc finger protein ZAT1 (267 aa).

Residues 5-27 form a C2H2-type 1 zinc finger; the sequence is HKCKLCWKSFANGRALGGHMRSH. 2 disordered regions span residues 34–99 and 181–204; these read PSQP…ADIK and SHKKKIAETDQLGSDELKKKKKKS. Over residues 52-62 the composition is skewed to basic and acidic residues; that stretch reads QDRESETESSK. Residues 63 to 73 show a composition bias toward basic residues; sequence KPSRKRSRLNR. Residues 83–97 are compositionally biased toward basic and acidic residues; the sequence is QSNEEGKSETARAAD. 2 consecutive C2H2-type zinc fingers follow at residues 160 to 182 and 209 to 231; these read FECETCEKVFKSYQALGGHRASH and HECPICAKVFTSGQALGGHKRSH.

It localises to the nucleus. Its function is as follows. Probable transcription factor that may be involved in stress responses. The protein is Zinc finger protein ZAT1 (ZAT1) of Arabidopsis thaliana (Mouse-ear cress).